The sequence spans 434 residues: Nicotinate phosphoribosyltransferase (434 aa).

His-242 carries the phosphohistidine; by autocatalysis modification.

This sequence belongs to the NAPRTase family. Post-translationally, transiently phosphorylated on a His residue during the reaction cycle. Phosphorylation strongly increases the affinity for substrates and increases the rate of nicotinate D-ribonucleotide production. Dephosphorylation regenerates the low-affinity form of the enzyme, leading to product release.

The catalysed reaction is nicotinate + 5-phospho-alpha-D-ribose 1-diphosphate + ATP + H2O = nicotinate beta-D-ribonucleotide + ADP + phosphate + diphosphate. The protein operates within cofactor biosynthesis; NAD(+) biosynthesis; nicotinate D-ribonucleotide from nicotinate: step 1/1. In terms of biological role, catalyzes the synthesis of beta-nicotinate D-ribonucleotide from nicotinate and 5-phospho-D-ribose 1-phosphate at the expense of ATP. This chain is Nicotinate phosphoribosyltransferase, found in Mesorhizobium japonicum (strain LMG 29417 / CECT 9101 / MAFF 303099) (Mesorhizobium loti (strain MAFF 303099)).